A 194-amino-acid chain; its full sequence is Phosphoprotein p30 (194 aa).

Belongs to the asfivirus phosphoprotein p30 family. Oligomer. Interacts with host HNRNPK. In terms of processing, phosphorylated on serine residues in the 115 N-terminal amino acids.

It localises to the host cytoplasm. It is found in the host nucleus. Its subcellular location is the virion. Modifies the subcellular distribution of heterogeneous nuclear ribonucleoprotein K (HNRNPK) and may contribute to modulate HNRNPK functions related to processing and export of mRNAs during ASFV infection. Necessary for virus internalization. This Ornithodoros (relapsing fever ticks) protein is Phosphoprotein p30.